Consider the following 370-residue polypeptide: Coproporphyrin III ferrochelatase (370 aa).

Ser58 and Tyr127 together coordinate Fe-coproporphyrin III. Positions 189 and 276 each coordinate Fe(2+).

It belongs to the ferrochelatase family.

It is found in the cytoplasm. The catalysed reaction is Fe-coproporphyrin III + 2 H(+) = coproporphyrin III + Fe(2+). It functions in the pathway porphyrin-containing compound metabolism; protoheme biosynthesis. Involved in coproporphyrin-dependent heme b biosynthesis. Catalyzes the insertion of ferrous iron into coproporphyrin III to form Fe-coproporphyrin III. This chain is Coproporphyrin III ferrochelatase, found in Corynebacterium glutamicum (strain R).